We begin with the raw amino-acid sequence, 860 residues long: Anoctamin-7 (860 aa).

The Cytoplasmic portion of the chain corresponds to 1–297 (MLRKQAGEED…YFAWLGFYTG (297 aa)). The interval 24–50 (NGCSYGSTAQASEAGKQQVAPSRVGSS) is disordered. A helical transmembrane segment spans residues 298–318 (WLLPAAVVGTVVFLAGCFLVF). Topologically, residues 319–362 (SDVPTQELCHSSDTFDMCPLCSDCSFWLLSSACTLAQAGRLFDH) are extracellular. The chain crosses the membrane as a helical span at residues 363–383 (GGTVFFSLFMALWAVLLLEYW). At 384–441 (KRKNATLAYRWDCSDYEDIEERPRPQFAATAPMTALNPITGEDEPYFPEKNRVRRMLA) the chain is on the cytoplasmic side. Residues 442–462 (GSVVLLMMVAVVIMCLVSIIL) traverse the membrane as a helical segment. Residues 463–492 (YRAVMAIIVSKSNNAFLSAWASRIASLTGS) lie on the Extracellular side of the membrane. Residues 493–513 (VVNLVFILILSKVYVILAQVL) traverse the membrane as a helical segment. At 514–530 (TRWEMHRTQTAFEDAFT) the chain is on the cytoplasmic side. Residues 531-551 (LKVFIFQFVNFYASPVYIAFF) traverse the membrane as a helical segment. Topologically, residues 552–652 (KGRFVGYPGN…FHEYLEMVLQ (101 aa)) are extracellular. A helical transmembrane segment spans residues 653-673 (FGFVTIFVAACPLAPLFALLN). Residues 674-701 (NWVEIRLDARKFVCEYRRPVAERAQDIG) are Cytoplasmic-facing. Residues 702–722 (IWFHILAGLTHLAVISNAFLL) form a helical membrane-spanning segment. Topologically, residues 723–779 (AFSSDFLPRVYYSWTRAPDLRGFLNFTLARAPPTFTSAHNRTCRYRAFRDDDGHYSP) are extracellular. N747 and N762 each carry an N-linked (GlcNAc...) asparagine glycan. A helical membrane pass occupies residues 780–800 (TYWTLLAIRLAFVIVFEHVVF). The Cytoplasmic portion of the chain corresponds to 801-860 (STGRFLDLLVPDIPESVEIKVKREYYLAKQALADNEALLGATGVKGEQPPSSEPSLGLPA).

This sequence belongs to the anoctamin family.

The protein localises to the cell membrane. The protein resides in the endoplasmic reticulum. The catalysed reaction is a 1,2-diacyl-sn-glycero-3-phospho-L-serine(in) = a 1,2-diacyl-sn-glycero-3-phospho-L-serine(out). It catalyses the reaction a beta-D-galactosyl-(1&lt;-&gt;1')-N-acylsphing-4-enine(out) = a beta-D-galactosyl-(1&lt;-&gt;1')-N-acylsphing-4-enine(in). The enzyme catalyses a 1,2-diacyl-sn-glycero-3-phosphocholine(in) = a 1,2-diacyl-sn-glycero-3-phosphocholine(out). Functionally, has calcium-dependent phospholipid scramblase activity; scrambles phosphatidylserine, phosphatidylcholine and galactosylceramide. Does not exhibit calcium-activated chloride channel (CaCC) activity. May play a role in cell-cell interactions. The protein is Anoctamin-7 (Ano7) of Rattus norvegicus (Rat).